The chain runs to 439 residues: Trigger factor (439 aa).

Positions Gly-175–Ile-260 constitute a PPIase FKBP-type domain.

This sequence belongs to the FKBP-type PPIase family. Tig subfamily.

Its subcellular location is the cytoplasm. It catalyses the reaction [protein]-peptidylproline (omega=180) = [protein]-peptidylproline (omega=0). Functionally, involved in protein export. Acts as a chaperone by maintaining the newly synthesized protein in an open conformation. Functions as a peptidyl-prolyl cis-trans isomerase. This chain is Trigger factor, found in Anaplasma phagocytophilum (strain HZ).